Consider the following 672-residue polypeptide: Glycine--tRNA ligase beta subunit (672 aa).

The protein belongs to the class-II aminoacyl-tRNA synthetase family. As to quaternary structure, tetramer of two alpha and two beta subunits.

It localises to the cytoplasm. It catalyses the reaction tRNA(Gly) + glycine + ATP = glycyl-tRNA(Gly) + AMP + diphosphate. In Thermotoga petrophila (strain ATCC BAA-488 / DSM 13995 / JCM 10881 / RKU-1), this protein is Glycine--tRNA ligase beta subunit.